The following is a 353-amino-acid chain: Probable peptide ABC transporter ATP-binding protein y4tS (353 aa).

Residues 6-256 (LKVESLTKHY…PVHPYTEALI (251 aa)) enclose the ABC transporter domain. Residue 49 to 56 (GESGCGKS) coordinates ATP.

The protein belongs to the ABC transporter superfamily.

The protein localises to the cell inner membrane. Functionally, probably part of a binding-protein-dependent transport system y4tOPQRS for a peptide. Probably responsible for energy coupling to the transport system. This chain is Probable peptide ABC transporter ATP-binding protein y4tS, found in Sinorhizobium fredii (strain NBRC 101917 / NGR234).